Reading from the N-terminus, the 490-residue chain is Glucose-6-phosphate 1-dehydrogenase (490 aa).

NADP(+) contacts are provided by residues arginine 48, 90 to 91 (DI), and lysine 145. Substrate-binding residues include histidine 175, lysine 179, glutamate 213, and aspartate 232. The Proton acceptor role is filled by histidine 237. Residues lysine 340 and lysine 345 each contribute to the substrate site.

Belongs to the glucose-6-phosphate dehydrogenase family.

It carries out the reaction D-glucose 6-phosphate + NADP(+) = 6-phospho-D-glucono-1,5-lactone + NADPH + H(+). It participates in carbohydrate degradation; pentose phosphate pathway; D-ribulose 5-phosphate from D-glucose 6-phosphate (oxidative stage): step 1/3. Functionally, catalyzes the oxidation of glucose 6-phosphate to 6-phosphogluconolactone. The protein is Glucose-6-phosphate 1-dehydrogenase of Buchnera aphidicola subsp. Baizongia pistaciae (strain Bp).